The chain runs to 295 residues: Protease HtpX (295 aa).

Transmembrane regions (helical) follow at residues 4 to 24 (ILLFLATNLAVVLIASITLSL) and 42 to 62 (QLLVFCAVFGFAGSLFSLFIS). Residue His-147 participates in Zn(2+) binding. The active site involves Glu-148. Residue His-151 participates in Zn(2+) binding. Transmembrane regions (helical) follow at residues 158 to 178 (VTLALVQGVVNTFVMFFARII) and 199 to 219 (ITTIFAELVLGFLASAIVMWF). Glu-224 is a Zn(2+) binding site.

It belongs to the peptidase M48B family. Zn(2+) is required as a cofactor.

It localises to the cell inner membrane. The sequence is that of Protease HtpX from Pseudomonas syringae pv. tomato (strain ATCC BAA-871 / DC3000).